The chain runs to 172 residues: Adenine phosphoribosyltransferase (172 aa).

The protein belongs to the purine/pyrimidine phosphoribosyltransferase family. In terms of assembly, homodimer.

Its subcellular location is the cytoplasm. It carries out the reaction AMP + diphosphate = 5-phospho-alpha-D-ribose 1-diphosphate + adenine. The protein operates within purine metabolism; AMP biosynthesis via salvage pathway; AMP from adenine: step 1/1. Its function is as follows. Catalyzes a salvage reaction resulting in the formation of AMP, that is energically less costly than de novo synthesis. The polypeptide is Adenine phosphoribosyltransferase (Methanococcus maripaludis (strain C7 / ATCC BAA-1331)).